A 242-amino-acid chain; its full sequence is RNA transcription, translation and transport factor protein (242 aa).

The protein belongs to the RTRAF family. Homodimer. Component of a tRNA-splicing ligase complex.

The protein resides in the nucleus. Its subcellular location is the cytoplasm. The protein localises to the cytosol. It localises to the perinuclear region. It is found in the cytoskeleton. The protein resides in the microtubule organizing center. Its subcellular location is the centrosome. RNA-binding protein involved in modulation of mRNA transcription by Polymerase II. Component of the tRNA-splicing ligase complex. The sequence is that of RNA transcription, translation and transport factor protein from Danio rerio (Zebrafish).